The primary structure comprises 227 residues: Ubiquitin domain-containing protein 1 (227 aa).

Residues 1 to 42 are disordered; sequence MGNCVGRQRRERPAAPGHPRKRAGRNEPLKKERLKWKSDYPM. The segment covering 24–38 has biased composition (basic and acidic residues); sequence GRNEPLKKERLKWKS. The 76-residue stretch at 149-224 folds into the Ubiquitin-like domain; that stretch reads FPLKVRLSTG…IQVIINQPPP (76 aa).

Interacts with UBTD1.

Functionally, may be involved in the regulation of cellular senescence through a positive feedback loop with TP53. Is a TP53 downstream target gene that increases the stability of TP53 protein by promoting the ubiquitination and degradation of MDM2. The protein is Ubiquitin domain-containing protein 1 (Ubtd1) of Mus musculus (Mouse).